The following is a 108-amino-acid chain: Synaptic plasticity regulator PANTS (108 aa).

Residues 58–108 are disordered; the sequence is KNHSTQAKDSLQESERKRLADQRKFTPVWELRQKPPSDWHLPLNQGEPQDP. Positions 67–81 are enriched in basic and acidic residues; the sequence is SLQESERKRLADQRK.

Belongs to the UPF0545 family. In terms of processing, rapidly degraded by proteolysis following neuronal stimulation, resulting in increased AMPA receptor clustering.

It is found in the synapse. The protein resides in the synaptic cleft. Functionally, negatively regulates long-term potentiation and modulates adult synaptic plasticity. The sequence is that of Synaptic plasticity regulator PANTS from Danio rerio (Zebrafish).